Here is a 574-residue protein sequence, read N- to C-terminus: Developmental and secondary metabolism regulator veA (574 aa).

4 disordered regions span residues 1-22 (MATR…SRIT), 39-60 (ERAR…VDPP), 255-500 (RSSD…GAGK), and 513-540 (RSYE…YPRR). A Velvet domain is found at 25–230 (GKKLTYKLNV…AEQGCRVRIR (206 aa)). The Nuclear localization signal motif lies at 39 to 44 (ERARAC). Composition is skewed to pro residues over residues 314 to 323 (RPLPPAPGPA) and 330 to 341 (PAPPAPPAPPSH). 4 stretches are compositionally biased toward polar residues: residues 343–353 (PGYQSHLSFGS), 385–394 (HARNPSTSAE), 406–415 (RMSTERSSYP), and 448–458 (VAQSAAPRSQT). Positions 457–501 (QTPSSSLVPSLPPLKALSGDYPNNLSQSSSSTSQSPSHDLGAGKK) are PEST. 2 stretches are compositionally biased toward low complexity: residues 459-474 (PSSS…KALS) and 482-493 (SQSSSSTSQSPS). A compositionally biased stretch (basic and acidic residues) spans 513–525 (RSYEDSFGHDDRP).

Belongs to the velvet family. VeA subfamily. In terms of assembly, component of the heterotrimeric velvet complex composed of laeA, veA and velB; VeA acting as a bridging protein between laeA and velB.

It localises to the nucleus. It is found in the cytoplasm. Its function is as follows. Component of the velvet transcription factor complex that controls sexual/asexual developmental ratio in response to light, promoting sexual development in the darkness while stimulating asexual sporulation under illumination. The velvet complex hat acts as a global regulator for secondary metabolite gene expression. Controls the expression of the penicillin gene cluster. The protein is Developmental and secondary metabolism regulator veA of Aspergillus oryzae (strain ATCC 42149 / RIB 40) (Yellow koji mold).